The primary structure comprises 177 residues: dCTP deaminase (177 aa).

Residues 100-105 (RSSIAR) and aspartate 116 each bind dCTP. The active-site Proton donor/acceptor is glutamate 126. DCTP-binding residues include tyrosine 159 and glutamine 166.

It belongs to the dCTP deaminase family. Homotrimer.

The catalysed reaction is dCTP + H2O + H(+) = dUTP + NH4(+). It participates in pyrimidine metabolism; dUMP biosynthesis; dUMP from dCTP (dUTP route): step 1/2. In terms of biological role, catalyzes the deamination of dCTP to dUTP. The polypeptide is dCTP deaminase (Korarchaeum cryptofilum (strain OPF8)).